Here is a 186-residue protein sequence, read N- to C-terminus: MTQQSPAFISPIWLKREQLIDVPEPIMLDWLFNQDSLTRRLDRLSDGGFSVFPQFEGWQALRRDECLALGLPLASEGWVREVYLCGNDSNWVFARSVAARSALQDGGLNMDELGTRSLGELLFSDPAFARGTLEVCHYPEAWLPDAVAARGLWARRSRFSRGALSVLVAEVFLPALCNTIHDKDPV.

Positions 80, 118, and 170 each coordinate substrate.

Belongs to the UbiC family.

Its subcellular location is the cytoplasm. It carries out the reaction chorismate = 4-hydroxybenzoate + pyruvate. The protein operates within cofactor biosynthesis; ubiquinone biosynthesis. Removes the pyruvyl group from chorismate, with concomitant aromatization of the ring, to provide 4-hydroxybenzoate (4HB) for the ubiquinone pathway. The polypeptide is Probable chorismate pyruvate-lyase (Pseudomonas savastanoi pv. phaseolicola (strain 1448A / Race 6) (Pseudomonas syringae pv. phaseolicola (strain 1448A / Race 6))).